A 359-amino-acid polypeptide reads, in one-letter code: AA9 family lytic polysaccharide monooxygenase C (359 aa).

Positions 1–16 (MKTGSILAALVASASA) are cleaved as a signal peptide. Histidine 17 and histidine 99 together coordinate Cu(2+). Intrachain disulfides connect cysteine 55–cysteine 185 and cysteine 155–cysteine 243. 2 residues coordinate O2: histidine 171 and glutamine 180. Tyrosine 182 contacts Cu(2+). N-linked (GlcNAc...) asparagine glycosylation is found at asparagine 189 and asparagine 284. The segment at 244–320 (PAGGSGGSSP…NPQPTNGGNS (77 aa)) is disordered. A compositionally biased stretch (low complexity) spans 251–296 (SSPAPATTASTPKPTSASAPKPVSTTASTPKPTNGSGSGTGAAHST). Residues 307 to 319 (TKASNPQPTNGGN) show a composition bias toward polar residues. The CBM1 domain occupies 323–358 (RAAALYGQCGGKGWTGPTSCASGTCKFSNDWYSQCL).

The protein belongs to the polysaccharide monooxygenase AA9 family. Cu(2+) serves as cofactor.

The protein localises to the secreted. The enzyme catalyses [(1-&gt;4)-beta-D-glucosyl]n+m + reduced acceptor + O2 = 4-dehydro-beta-D-glucosyl-[(1-&gt;4)-beta-D-glucosyl]n-1 + [(1-&gt;4)-beta-D-glucosyl]m + acceptor + H2O.. Its activity is regulated as follows. Activity in inhibited by excessive amounts of H(2)O(2). In terms of biological role, lytic polysaccharide monooxygenase (LPMO) that depolymerizes crystalline and amorphous polysaccharides via the oxidation of scissile alpha- or beta-(1-4)-glycosidic bonds, yielding C4 oxidation products. Catalysis by LPMOs requires the reduction of the active-site copper from Cu(II) to Cu(I) by a reducing agent and H(2)O(2) or O(2) as a cosubstrate. Degrades various hemicelluloses, in particular xyloglucan. Active on tamarind xyloglucan and konjac glucomannan. Acts on the glucose backbone of xyloglucan, accepting various substitutions (xylose, galactose) in almost allpositions. In contrast to all previously characterized LPMOs, which are active only on polysaccharides, is able to cleave soluble cello-oligosaccharides as short as a tetramer. The cello-oligosaccharide products released by this enzyme contain a C4 gemdiol/keto group at the non-reducing end. Binds to the inner wood cell wall layer and consumes enzymatically generated H(2)O(2). The protein is AA9 family lytic polysaccharide monooxygenase C (gh61-3) of Neurospora crassa (strain ATCC 24698 / 74-OR23-1A / CBS 708.71 / DSM 1257 / FGSC 987).